Reading from the N-terminus, the 391-residue chain is Phosphoglycerate kinase (391 aa).

Substrate is bound by residues 21 to 23, R36, 59 to 62, R113, and R146; these read DLN and HLGR. ATP-binding positions include K197, E319, and 345-348; that span reads GGDT.

It belongs to the phosphoglycerate kinase family. In terms of assembly, monomer.

It localises to the cytoplasm. The catalysed reaction is (2R)-3-phosphoglycerate + ATP = (2R)-3-phospho-glyceroyl phosphate + ADP. The protein operates within carbohydrate degradation; glycolysis; pyruvate from D-glyceraldehyde 3-phosphate: step 2/5. The polypeptide is Phosphoglycerate kinase (Shewanella piezotolerans (strain WP3 / JCM 13877)).